Here is a 362-residue protein sequence, read N- to C-terminus: Atypical chemokine receptor 3 (362 aa).

Over 1-40 (MDLHLFDYSEPGNFSDISWPCNSSDCIVVDTVMCPNMPNK) the chain is Extracellular. Asparagine 13, asparagine 22, and asparagine 39 each carry an N-linked (GlcNAc...) asparagine glycan. The helical transmembrane segment at 41 to 61 (SVLLYTLSFIYIFIFVIGMIA) threads the bilayer. The Cytoplasmic portion of the chain corresponds to 62–81 (NSVVVWVNIQAKTTGYDTHC). Residues 82–102 (YILNLAIADLWVVLTIPVWVV) traverse the membrane as a helical segment. The Extracellular segment spans residues 103–118 (SLVQHNQWPMGELTCK). Cysteine 117 and cysteine 196 are joined by a disulfide. A helical membrane pass occupies residues 119 to 139 (VTHLIFSINLFGSIFFLTCMS). The Cytoplasmic portion of the chain corresponds to 140–162 (VDRYLSITYFTNTPSSRKKMVRR). Residues 163–183 (VVCILVWLLAFCVSLPDTYYL) traverse the membrane as a helical segment. Over 184–213 (KTVTSASNNETYCRSFYPEHSIKEWLIGME) the chain is Extracellular. Residues 214–234 (LVSVVLGFAVPFSIIAVFYFL) traverse the membrane as a helical segment. Residues 235–252 (LARAISASSDQEKHSSRK) lie on the Cytoplasmic side of the membrane. Residues 253-273 (IIFSYVVVFLVCWLPYHVAVL) traverse the membrane as a helical segment. The Extracellular portion of the chain corresponds to 274–296 (LDIFSILHYIPFTCRLEHALFTA). A helical transmembrane segment spans residues 297–319 (LHVTQCLSLVHCCVNPVLYSFIN). Residues 320 to 362 (RNYRYELMKAFIFKYSAKTGLTKLIDASRVSETEYSALEQSTK) lie on the Cytoplasmic side of the membrane. The tract at residues 324-362 (YELMKAFIFKYSAKTGLTKLIDASRVSETEYSALEQSTK) is C-terminal cytoplasmic tail. A phosphoserine mark is found at serine 347, serine 350, and serine 355.

The protein belongs to the G-protein coupled receptor 1 family. Atypical chemokine receptor subfamily. In terms of assembly, homodimer. Can form heterodimers with CXCR4; heterodimerization may regulate CXCR4 signaling activity. Interacts with ARRB1 and ARRB2. Post-translationally, the Ser/Thr residues in the C-terminal cytoplasmic tail may be phosphorylated. In terms of processing, ubiquitinated at the Lys residues in its C-terminal cytoplasmic tail and is essential for correct trafficking from and to the cell membrane. Deubiquitinated by CXCL12-stimulation in a reversible manner. In terms of tissue distribution, expressed in monocytes, basophils, B-cells, umbilical vein endothelial cells (HUVEC) and B-lymphoblastoid cells. Lower expression detected in CD4+ T-lymphocytes and natural killer cells. In the brain, detected in endothelial cells and capillaries, and in mature neurons of the frontal cortex and hippocampus. Expressed in tubular formation in the kidney. Highly expressed in astroglial tumor endothelial, microglial and glioma cells. Expressed at low levels in normal CD34+ progenitor cells, but at very high levels in several myeloid malignant cell lines. Expressed in breast carcinomas but not in normal breast tissue (at protein level).

It is found in the cell membrane. The protein resides in the early endosome. The protein localises to the recycling endosome. Functionally, atypical chemokine receptor that controls chemokine levels and localization via high-affinity chemokine binding that is uncoupled from classic ligand-driven signal transduction cascades, resulting instead in chemokine sequestration, degradation, or transcytosis. Also known as interceptor (internalizing receptor) or chemokine-scavenging receptor or chemokine decoy receptor. Acts as a receptor for chemokines CXCL11 and CXCL12/SDF1. Chemokine binding does not activate G-protein-mediated signal transduction but instead induces beta-arrestin recruitment, leading to ligand internalization and activation of MAPK signaling pathway. Required for regulation of CXCR4 protein levels in migrating interneurons, thereby adapting their chemokine responsiveness. In glioma cells, transduces signals via MEK/ERK pathway, mediating resistance to apoptosis. Promotes cell growth and survival. Not involved in cell migration, adhesion or proliferation of normal hematopoietic progenitors but activated by CXCL11 in malignant hemapoietic cells, leading to phosphorylation of ERK1/2 (MAPK3/MAPK1) and enhanced cell adhesion and migration. Plays a regulatory role in CXCR4-mediated activation of cell surface integrins by CXCL12. Required for heart valve development. Regulates axon guidance in the oculomotor system through the regulation of CXCL12 levels. (Microbial infection) Acts as a coreceptor with CXCR4 for a restricted number of HIV isolates. The polypeptide is Atypical chemokine receptor 3 (Homo sapiens (Human)).